The sequence spans 387 residues: O-phospho-L-seryl-tRNA:Cys-tRNA synthase 2 (387 aa).

Pyridoxal 5'-phosphate-binding positions include 89–90 (AR), Asn196, and 219–221 (SGH). At Lys222 the chain carries N6-(pyridoxal phosphate)lysine.

The protein belongs to the SepCysS family. Homodimer. Interacts with SepRS. It depends on pyridoxal 5'-phosphate as a cofactor.

It carries out the reaction O-phospho-L-seryl-tRNA(Cys) + hydrogen sulfide + H(+) = L-cysteinyl-tRNA(Cys) + phosphate. Its function is as follows. Converts O-phospho-L-seryl-tRNA(Cys) (Sep-tRNA(Cys)) to L-cysteinyl-tRNA(Cys) (Cys-tRNA(Cys)). The chain is O-phospho-L-seryl-tRNA:Cys-tRNA synthase 2 from Methanococcoides burtonii (strain DSM 6242 / NBRC 107633 / OCM 468 / ACE-M).